The sequence spans 534 residues: CTP synthase (534 aa).

The tract at residues 1–267 (MTKYIFVTGG…DQIVCDHLKL (267 aa)) is amidoligase domain. Residue Ser-13 participates in CTP binding. Residue Ser-13 participates in UTP binding. Position 14–19 (14–19 (SIGKGI)) interacts with ATP. Tyr-54 lines the L-glutamine pocket. Asp-71 contacts ATP. Mg(2+) is bound by residues Asp-71 and Glu-141. Residues 148 to 150 (DIE), 188 to 193 (KTKPTQ), and Lys-224 contribute to the CTP site. Residues 188–193 (KTKPTQ) and Lys-224 contribute to the UTP site. A Glutamine amidotransferase type-1 domain is found at 292–534 (KIALVGKYVE…FVTAAVENMK (243 aa)). L-glutamine is bound at residue Gly-354. Cys-381 acts as the Nucleophile; for glutamine hydrolysis in catalysis. L-glutamine-binding positions include 382–385 (LGMQ), Glu-405, and Arg-463. Active-site residues include His-508 and Glu-510.

It belongs to the CTP synthase family. As to quaternary structure, homotetramer.

It catalyses the reaction UTP + L-glutamine + ATP + H2O = CTP + L-glutamate + ADP + phosphate + 2 H(+). The catalysed reaction is L-glutamine + H2O = L-glutamate + NH4(+). The enzyme catalyses UTP + NH4(+) + ATP = CTP + ADP + phosphate + 2 H(+). It participates in pyrimidine metabolism; CTP biosynthesis via de novo pathway; CTP from UDP: step 2/2. With respect to regulation, allosterically activated by GTP, when glutamine is the substrate; GTP has no effect on the reaction when ammonia is the substrate. The allosteric effector GTP functions by stabilizing the protein conformation that binds the tetrahedral intermediate(s) formed during glutamine hydrolysis. Inhibited by the product CTP, via allosteric rather than competitive inhibition. Catalyzes the ATP-dependent amination of UTP to CTP with either L-glutamine or ammonia as the source of nitrogen. Regulates intracellular CTP levels through interactions with the four ribonucleotide triphosphates. This chain is CTP synthase, found in Streptococcus agalactiae serotype Ia (strain ATCC 27591 / A909 / CDC SS700).